The following is a 120-amino-acid chain: Ribosome-binding factor A (120 aa).

It belongs to the RbfA family. Monomer. Binds 30S ribosomal subunits, but not 50S ribosomal subunits or 70S ribosomes.

It localises to the cytoplasm. Functionally, one of several proteins that assist in the late maturation steps of the functional core of the 30S ribosomal subunit. Associates with free 30S ribosomal subunits (but not with 30S subunits that are part of 70S ribosomes or polysomes). Required for efficient processing of 16S rRNA. May interact with the 5'-terminal helix region of 16S rRNA. The chain is Ribosome-binding factor A from Chlorobaculum parvum (strain DSM 263 / NCIMB 8327) (Chlorobium vibrioforme subsp. thiosulfatophilum).